A 404-amino-acid polypeptide reads, in one-letter code: Trigger factor (404 aa).

The region spanning 160-225 is the PPIase FKBP-type domain; the sequence is KDHLFVRTEE…VLEVKTLKLP (66 aa).

This sequence belongs to the FKBP-type PPIase family. Tig subfamily.

Its subcellular location is the cytoplasm. It catalyses the reaction [protein]-peptidylproline (omega=180) = [protein]-peptidylproline (omega=0). Its function is as follows. Involved in protein export. Acts as a chaperone by maintaining the newly synthesized protein in an open conformation. Functions as a peptidyl-prolyl cis-trans isomerase. This chain is Trigger factor, found in Thermus thermophilus (strain ATCC 27634 / DSM 579 / HB8).